Consider the following 179-residue polypeptide: Inner membrane-spanning protein YciB (179 aa).

5 helical membrane-spanning segments follow: residues 3–23 (FLYDLFPVILFFIVYKLFGIY), 49–69 (NALIMSGVIIVVFGGATLWLQ), 76–96 (WKPTILYWVFTVGLLGSQWLF), 119–139 (LNLAWAIFFLLLGFLNLYVAY), and 149–169 (FKLFGTMGLMFVFVIGQTLLL).

The protein belongs to the YciB family.

It is found in the cell inner membrane. In terms of biological role, plays a role in cell envelope biogenesis, maintenance of cell envelope integrity and membrane homeostasis. This is Inner membrane-spanning protein YciB from Methylobacillus flagellatus (strain ATCC 51484 / DSM 6875 / VKM B-1610 / KT).